Reading from the N-terminus, the 193-residue chain is Zinc finger CCHC domain-containing protein 17 (193 aa).

The S1 motif; truncated domain maps to 1-40 (MSSCRVDKPSEIVDVGDKVWVKLIGREMKNDRIKVSLSMK). Serine 66 carries the post-translational modification Phosphoserine. Residues 83–100 (TTCKKCGCKGHFAKDCFM) form a CCHC-type zinc finger. The residue at position 96 (lysine 96) is an N6-acetyllysine. The disordered stretch occupies residues 113-193 (EEEEKEEAKS…KKKHKKKHKE (81 aa)). Over residues 118–129 (EEAKSAEFEKPV) the composition is skewed to basic and acidic residues. A compositionally biased stretch (basic residues) spans 134–150 (PSRKRKKEKKKKKHRDR). Serine 135 bears the Phosphoserine mark. Residues 163-177 (DTGKRARHTSKDSKA) are compositionally biased toward basic and acidic residues. Residues 178-193 (AKKKKKKKKHKKKHKE) show a composition bias toward basic residues.

In terms of assembly, may interact with PNN. May associate with the 60 S ribosomal subunit.

It localises to the nucleus. It is found in the nucleolus. The polypeptide is Zinc finger CCHC domain-containing protein 17 (ZCCHC17) (Macaca fascicularis (Crab-eating macaque)).